A 269-amino-acid chain; its full sequence is GTP cyclohydrolase FolE2 (269 aa).

It belongs to the GTP cyclohydrolase IV family.

It catalyses the reaction GTP + H2O = 7,8-dihydroneopterin 3'-triphosphate + formate + H(+). Its pathway is cofactor biosynthesis; 7,8-dihydroneopterin triphosphate biosynthesis; 7,8-dihydroneopterin triphosphate from GTP: step 1/1. Converts GTP to 7,8-dihydroneopterin triphosphate. The sequence is that of GTP cyclohydrolase FolE2 from Burkholderia thailandensis (strain ATCC 700388 / DSM 13276 / CCUG 48851 / CIP 106301 / E264).